Here is a 158-residue protein sequence, read N- to C-terminus: Antitoxin TacA (158 aa).

The protein belongs to the TacA antitoxin family. Forms a complex with cognate toxin TacT.

Its function is as follows. Antitoxin component of a type II toxin-antitoxin (TA) system. Counteracts the toxic effect of cognate toxin TacT. In terms of biological role, tacA-TacT both represses and derepresses expression of its own operon. The sequence is that of Antitoxin TacA from Mycobacterium tuberculosis (strain ATCC 25618 / H37Rv).